The following is a 412-amino-acid chain: Putative competence-damage inducible protein (412 aa).

This sequence belongs to the CinA family.

This Bacillus mycoides (strain KBAB4) (Bacillus weihenstephanensis) protein is Putative competence-damage inducible protein.